A 1410-amino-acid polypeptide reads, in one-letter code: Slit homolog 1 protein (1410 aa).

The first 16 residues, 1–16 (MLICFIFILLIPESAT), serve as a signal peptide directing secretion. One can recognise an LRRNT 1 domain in the interval 17 to 43 (CPAECVCVDRTVSCVGQQLTEVPQNIP). LRR repeat units lie at residues 22–42 (VCVDRTVSCVGQQLTEVPQNI), 43–66 (PNDTIRLDLQDNEITKIGPNDFSS), 67–90 (LMNLKALQLMDNQIVTIHNQSFSS), 91–114 (LVFLQKLRLSRNRIRHLPDNVFQN), 116–138 (LKLTHLDLSENDITVVSDAQLQG), 140–162 (EFLEVLNLDKNHIFCLENNVISS), 163–186 (WVSLEVLTLNGNRLTTFEEPSNAR), 219–242 (TVCATPLNLQGSSIEILQDKFMTC), 286–309 (PPSTTEIRLEQNQISSIPSHSFKN), 310–333 (LKNLTRLDLSKNIITEIQPKAFLG), 335–357 (HNLHTLVLYGNNITDLKSDTFEG), 358–381 (LGSLQLLLLNANQLTCIRRGTFDH), 383–405 (PKLSMLSLYDNDIKSISEVTFQN), 407–430 (TSLSTLHLAKNPLICDCNLQWLAQ), 442–465 (ARCEQPKRLRKKKFATLPPNKFKC), 489–510 (CDCYGTTVDCNKRGLNTIPTSI), 511–535 (PRFATQLLLSGNNISTVDLNSNIHV), 536–559 (LENLEVLDLSNNHITFINDKSFEK), 561–583 (SKLRELRLNDNKLHHFSSMVLDE), and 585–607 (SNLEILDLSGNNIQCFSSIFFNK). The LRRCT 1 domain maps to 195–243 (NPWNCDCRLRWMRKWLEKAEGQNKTVCATPLNLQGSSIEILQDKFMTCS). Residues 259–286 (ICPLPCTCTGTTVDCRDSGLTYVPTNLP) enclose the LRRNT 2 domain. In terms of domain architecture, LRRCT 2 spans 417–466 (NPLICDCNLQWLAQINLQKNIETSGARCEQPKRLRKKKFATLPPNKFKCK). Residues 484-511 (ICPTQCDCYGTTVDCNKRGLNTIPTSIP) enclose the LRRNT 3 domain. In terms of domain architecture, LRRCT 3 spans 619-671 (NDLLCDCRILPLMSWLRSNSSHSIDIPPCQQFQYSDNESDKQRCAAFPEETCS). The LRRNT 4 domain maps to 677 to 703 (CPPKCSCLDRVVRCSNKNLTSFPSRIP). LRR repeat units lie at residues 681 to 703 (CSCLDRVVRCSNKNLTSFPSRIP), 704 to 726 (FDTTELYLDANYINEIPAHDLNR), 727 to 750 (LYSLTKLDLSHNRLISLENNTFSN), 752 to 774 (TRLSTLIISYNKLRCLQPLAFNG), 775 to 798 (LNALRILSLHGNDISFLPQSAFSN), and 800 to 823 (TSITHIAVGSNSLYCDCNMAWFSK). The region spanning 810-859 (NSLYCDCNMAWFSKWIKSKFIEAGIARCEYPNTVSNQLLLTAQPYQFTCD) is the LRRCT 4 domain. 2 consecutive EGF-like domains span residues 871–906 (DLCLNSPCKNNAICETTSSRKYTCNCTPGFYGVHCE) and 908–945 (QIDACYGSPCLNNATCKVAQAGRFNCYCNKGFEGDYCE). 18 disulfide bridges follow: Cys873–Cys884, Cys878–Cys894, Cys896–Cys905, Cys912–Cys923, Cys917–Cys933, Cys935–Cys944, Cys951–Cys962, Cys956–Cys971, Cys973–Cys982, Cys989–Cys1002, Cys996–Cys1011, Cys1013–Cys1022, Cys1029–Cys1040, Cys1034–Cys1049, Cys1051–Cys1060, Cys1076–Cys1086, Cys1081–Cys1097, and Cys1099–Cys1108. The region spanning 947–983 (NIDDCVNSKCENGGKCVDLINSYRCDCPMEYEGKHCE) is the EGF-like 1; calcium-binding domain. The region spanning 985 to 1023 (KLEYCTKKLNPCENNGKCIPINGSYSCMCSPGFTGNNCE) is the EGF-like 3 domain. An EGF-like 2; calcium-binding domain is found at 1025–1061 (NIDDCKNVECQNGGSCVDGILSYDCLCRPGYAGQYCE). An EGF-like 4 domain is found at 1072–1109 (KTDACQQSACGQGECVASQNSSDFTCKCHEGFSGPSCD). The Laminin G-like domain occupies 1112-1285 (MSVGFKNPGA…LENVNTEQSC (174 aa)). The stretch at 1197-1221 (TSERKCFLQIDKNPVQIVENSGKSD) is one LRR 27 repeat. Intrachain disulfides connect Cys1259–Cys1285, Cys1292–Cys1302, Cys1297–Cys1314, Cys1316–Cys1325, Cys1332–Cys1368, Cys1346–Cys1382, Cys1357–Cys1398, and Cys1361–Cys1400. Residues 1288 to 1326 (TVNFCAGIDCGNGKCTNNALSPKGYMCQCDSHFSGEHCD) form the EGF-like 5 domain. Residues 1332–1406 (CDKQKFRRHH…QCQCEPTKSV (75 aa)) enclose the CTCK domain.

In terms of assembly, interacts with eva-1.

The protein resides in the secreted. Functions as a ligand for sax-3 receptor during larval development. Acts via the sax-3/Robo receptor to direct ventral axon guidance and guidance at the midline during embryonic development. This Caenorhabditis elegans protein is Slit homolog 1 protein (slt-1).